The chain runs to 723 residues: Pescadillo homolog (723 aa).

The BRCT domain maps to Glu380–Pro497. Disordered stretches follow at residues Arg440–Gly471 and Leu501–Lys723. Positions Leu522–Glu551 form a coiled coil. Composition is skewed to acidic residues over residues Ala537–Glu550, Met588–Asp600, and Phe608–Glu622. 3 stretches are compositionally biased toward basic and acidic residues: residues Glu623–Glu634, Lys670–Lys681, and Lys700–Leu709. Positions Lys656 to Lys723 form a coiled coil. Basic residues predominate over residues Arg710–Lys723.

This sequence belongs to the pescadillo family. In terms of assembly, component of the NOP7 complex, composed of ERB1, NOP7 and YTM1. The complex is held together by ERB1, which interacts with NOP7 via its N-terminal domain and with YTM1 via a high-affinity interaction between the seven-bladed beta-propeller domains of the 2 proteins. The NOP7 complex associates with the 66S pre-ribosome.

It is found in the nucleus. The protein resides in the nucleolus. Its subcellular location is the nucleoplasm. Its function is as follows. Component of the NOP7 complex, which is required for maturation of the 25S and 5.8S ribosomal RNAs and formation of the 60S ribosome. This Ajellomyces capsulatus (strain NAm1 / WU24) (Darling's disease fungus) protein is Pescadillo homolog.